Reading from the N-terminus, the 152-residue chain is DNA-binding transcriptional activator DecR (152 aa).

The HTH asnC-type domain maps to 2-63 (LDKIDRKLLA…LLDPEKIGLG (62 aa)). Residues 21-40 (LQALAEAVNLTTTPCWKRLK) constitute a DNA-binding region (H-T-H motif).

In terms of biological role, plays a role in L-cysteine detoxification. Binds to the dlsT(yhaO)-yhaM operon promoter in the presence but not absence of L-cysteine; activates transcription from the dlsT(yhaO)-yhaM operon. This Escherichia coli O157:H7 protein is DNA-binding transcriptional activator DecR (decR).